A 139-amino-acid chain; its full sequence is Transcription antitermination protein NusB (139 aa).

This sequence belongs to the NusB family.

Its function is as follows. Involved in transcription antitermination. Required for transcription of ribosomal RNA (rRNA) genes. Binds specifically to the boxA antiterminator sequence of the ribosomal RNA (rrn) operons. The polypeptide is Transcription antitermination protein NusB (Rubrobacter xylanophilus (strain DSM 9941 / JCM 11954 / NBRC 16129 / PRD-1)).